Here is a 137-residue protein sequence, read N- to C-terminus: Profilin-3 (137 aa).

Belongs to the profilin family. Interacts with ACTRT3.

Its subcellular location is the cytoplasm. The protein resides in the cytoskeleton. It is found in the nucleus. In terms of biological role, binds to actin and affects the structure of the cytoskeleton. Binds to poly-L-proline, phosphatidylinositol 3-phosphate (PtdIns(3)P), phosphatidylinositol 4,5-bisphosphate (PtdIns(4,5)P2) and phosphatidylinositol 4-phosphate (PtdIns(4)P). Slightly reduces actin polymerization. May be involved in spermatogenesis. In Bos taurus (Bovine), this protein is Profilin-3 (PFN3).